A 496-amino-acid chain; its full sequence is Xylulose kinase (496 aa).

83-84 contributes to the substrate binding site; the sequence is MH. Aspartate 237 serves as the catalytic Proton acceptor.

The protein belongs to the FGGY kinase family.

The catalysed reaction is D-xylulose + ATP = D-xylulose 5-phosphate + ADP + H(+). Catalyzes the phosphorylation of D-xylulose to D-xylulose 5-phosphate. The protein is Xylulose kinase of Staphylococcus epidermidis (strain ATCC 35984 / DSM 28319 / BCRC 17069 / CCUG 31568 / BM 3577 / RP62A).